A 151-amino-acid chain; its full sequence is UPF0179 protein MJ1627 (151 aa).

Belongs to the UPF0179 family.

In Methanocaldococcus jannaschii (strain ATCC 43067 / DSM 2661 / JAL-1 / JCM 10045 / NBRC 100440) (Methanococcus jannaschii), this protein is UPF0179 protein MJ1627.